We begin with the raw amino-acid sequence, 318 residues long: NADH-ubiquinone oxidoreductase chain 1 (318 aa).

8 consecutive transmembrane segments (helical) span residues 2–22, 69–89, 102–122, 146–166, 171–191, 222–242, 253–273, and 294–314; these read FLIN…FLTL, LLFI…WLPI, ILFI…SGWA, LAII…SSLI, YMWI…STLA, LFFL…AILF, EMFT…FLWI, and LPLT…LSSI.

It belongs to the complex I subunit 1 family. In terms of assembly, core subunit of respiratory chain NADH dehydrogenase (Complex I) which is composed of 45 different subunits.

Its subcellular location is the mitochondrion inner membrane. It carries out the reaction a ubiquinone + NADH + 5 H(+)(in) = a ubiquinol + NAD(+) + 4 H(+)(out). Core subunit of the mitochondrial membrane respiratory chain NADH dehydrogenase (Complex I) which catalyzes electron transfer from NADH through the respiratory chain, using ubiquinone as an electron acceptor. Essential for the catalytic activity and assembly of complex I. This Oryctolagus cuniculus (Rabbit) protein is NADH-ubiquinone oxidoreductase chain 1 (MT-ND1).